The sequence spans 83 residues: Small ribosomal subunit protein bS21 (83 aa).

Residues Thr-40 to Ala-83 are disordered. Residues Arg-47–Tyr-62 show a composition bias toward basic residues. Low complexity predominate over residues Ser-71–Ala-83.

The protein belongs to the bacterial ribosomal protein bS21 family.

The sequence is that of Small ribosomal subunit protein bS21 from Akkermansia muciniphila (strain ATCC BAA-835 / DSM 22959 / JCM 33894 / BCRC 81048 / CCUG 64013 / CIP 107961 / Muc).